Here is a 36-residue protein sequence, read N- to C-terminus: Photosystem I reaction center subunit VIII (36 aa).

The helical transmembrane segment at 6 to 28 (FPSVLVPLVGLVFPAMAMASLSL) threads the bilayer.

It belongs to the PsaI family.

The protein localises to the plastid. The protein resides in the chloroplast thylakoid membrane. Functionally, may help in the organization of the PsaL subunit. The protein is Photosystem I reaction center subunit VIII of Panax ginseng (Korean ginseng).